The following is a 76-amino-acid chain: UPF0291 protein BCE_1981 (76 aa).

It belongs to the UPF0291 family.

The protein resides in the cytoplasm. The protein is UPF0291 protein BCE_1981 of Bacillus cereus (strain ATCC 10987 / NRS 248).